The following is a 491-amino-acid chain: Probable glycine dehydrogenase (decarboxylating) subunit 2 (491 aa).

Position 273 is an N6-(pyridoxal phosphate)lysine (Lys-273).

The protein belongs to the GcvP family. C-terminal subunit subfamily. As to quaternary structure, the glycine cleavage system is composed of four proteins: P, T, L and H. In this organism, the P 'protein' is a heterodimer of two subunits. The cofactor is pyridoxal 5'-phosphate.

The catalysed reaction is N(6)-[(R)-lipoyl]-L-lysyl-[glycine-cleavage complex H protein] + glycine + H(+) = N(6)-[(R)-S(8)-aminomethyldihydrolipoyl]-L-lysyl-[glycine-cleavage complex H protein] + CO2. Functionally, the glycine cleavage system catalyzes the degradation of glycine. The P protein binds the alpha-amino group of glycine through its pyridoxal phosphate cofactor; CO(2) is released and the remaining methylamine moiety is then transferred to the lipoamide cofactor of the H protein. In Bacillus cereus (strain G9842), this protein is Probable glycine dehydrogenase (decarboxylating) subunit 2.